A 346-amino-acid polypeptide reads, in one-letter code: Inositol 2-dehydrogenase (346 aa).

Belongs to the Gfo/Idh/MocA family. In terms of assembly, homotetramer.

It catalyses the reaction myo-inositol + NAD(+) = scyllo-inosose + NADH + H(+). In terms of biological role, involved in the oxidation of myo-inositol (MI) to 2-keto-myo-inositol (2KMI or 2-inosose). This Rhodococcus erythropolis (strain PR4 / NBRC 100887) protein is Inositol 2-dehydrogenase.